Here is a 359-residue protein sequence, read N- to C-terminus: Fructose-bisphosphate aldolase (359 aa).

Ser-50 is a D-glyceraldehyde 3-phosphate binding site. Asp-83 functions as the Proton donor in the catalytic mechanism. 4 residues coordinate Zn(2+): His-84, Asp-105, Glu-142, and His-198. Residue Gly-199 participates in dihydroxyacetone phosphate binding. His-232 is a Zn(2+) binding site. Residues 233–235 and 275–278 contribute to the dihydroxyacetone phosphate site; these read GSS and NIDT.

It belongs to the class II fructose-bisphosphate aldolase family. As to quaternary structure, homodimer. Zn(2+) is required as a cofactor.

The enzyme catalyses beta-D-fructose 1,6-bisphosphate = D-glyceraldehyde 3-phosphate + dihydroxyacetone phosphate. Its pathway is carbohydrate biosynthesis; Calvin cycle. The protein operates within carbohydrate degradation; glycolysis; D-glyceraldehyde 3-phosphate and glycerone phosphate from D-glucose: step 4/4. Catalyzes the aldol condensation of dihydroxyacetone phosphate (DHAP or glycerone-phosphate) with glyceraldehyde 3-phosphate (G3P) to form fructose 1,6-bisphosphate (FBP) in gluconeogenesis and the reverse reaction in glycolysis. The chain is Fructose-bisphosphate aldolase (cbbA) from Sinorhizobium medicae (strain WSM419) (Ensifer medicae).